We begin with the raw amino-acid sequence, 247 residues long: ATP synthase subunit a, chloroplastic (247 aa).

The next 5 helical transmembrane spans lie at 38-58, 95-115, 134-154, 199-219, and 220-240; these read QVLI…TIAV, VPFI…GALL, INTT…AGLT, LVVV…VMFL, and GLFT…AYIG.

It belongs to the ATPase A chain family. In terms of assembly, F-type ATPases have 2 components, CF(1) - the catalytic core - and CF(0) - the membrane proton channel. CF(1) has five subunits: alpha(3), beta(3), gamma(1), delta(1), epsilon(1). CF(0) has four main subunits: a, b, b' and c.

Its subcellular location is the plastid. The protein localises to the chloroplast thylakoid membrane. Its function is as follows. Key component of the proton channel; it plays a direct role in the translocation of protons across the membrane. In Buxus microphylla (Littleleaf boxwood), this protein is ATP synthase subunit a, chloroplastic.